The following is a 202-amino-acid chain: Imidazoleglycerol-phosphate dehydratase (202 aa).

Belongs to the imidazoleglycerol-phosphate dehydratase family.

Its subcellular location is the cytoplasm. The enzyme catalyses D-erythro-1-(imidazol-4-yl)glycerol 3-phosphate = 3-(imidazol-4-yl)-2-oxopropyl phosphate + H2O. It participates in amino-acid biosynthesis; L-histidine biosynthesis; L-histidine from 5-phospho-alpha-D-ribose 1-diphosphate: step 6/9. The polypeptide is Imidazoleglycerol-phosphate dehydratase (Corynebacterium diphtheriae (strain ATCC 700971 / NCTC 13129 / Biotype gravis)).